The primary structure comprises 247 residues: Sulfate transporter CysZ (247 aa).

5 helical membrane-spanning segments follow: residues 29–49 (FVVL…FYLF), 66–86 (FLSW…LATF), 141–160 (LLYI…IPAL), 164–186 (VGPV…DYPF), and 212–232 (VLVS…PVAI).

It belongs to the CysZ family.

The protein localises to the cell inner membrane. Functionally, high affinity, high specificity proton-dependent sulfate transporter, which mediates sulfate uptake. Provides the sulfur source for the cysteine synthesis pathway. In Vibrio parahaemolyticus serotype O3:K6 (strain RIMD 2210633), this protein is Sulfate transporter CysZ.